A 207-amino-acid polypeptide reads, in one-letter code: 3-demethoxyubiquinol 3-hydroxylase (207 aa).

Fe cation contacts are provided by Glu56, Glu86, His89, Glu138, Glu170, and His173.

This sequence belongs to the COQ7 family. Fe cation is required as a cofactor.

The protein resides in the cell membrane. The catalysed reaction is a 5-methoxy-2-methyl-3-(all-trans-polyprenyl)benzene-1,4-diol + AH2 + O2 = a 3-demethylubiquinol + A + H2O. The protein operates within cofactor biosynthesis; ubiquinone biosynthesis. Functionally, catalyzes the hydroxylation of 2-nonaprenyl-3-methyl-6-methoxy-1,4-benzoquinol during ubiquinone biosynthesis. This is 3-demethoxyubiquinol 3-hydroxylase from Cupriavidus necator (strain ATCC 17699 / DSM 428 / KCTC 22496 / NCIMB 10442 / H16 / Stanier 337) (Ralstonia eutropha).